Here is a 204-residue protein sequence, read N- to C-terminus: Holliday junction branch migration complex subunit RuvA (204 aa).

Positions 1–64 are domain I; the sequence is MIGKLKGTIE…EDQIRLFGFM (64 aa). The interval 65-143 is domain II; it reads AVLEREWFNL…AFAGEATNIG (79 aa). The tract at residues 144–151 is flexible linker; that stretch reads FKQELGEG. Residues 152-204 form a domain III region; that stretch reads VAPAPVSDAVSALTNLGYSRDQAANAIAAAMKVAGDEADSAKLIRLGLKELSR.

It belongs to the RuvA family. As to quaternary structure, homotetramer. Forms an RuvA(8)-RuvB(12)-Holliday junction (HJ) complex. HJ DNA is sandwiched between 2 RuvA tetramers; dsDNA enters through RuvA and exits via RuvB. An RuvB hexamer assembles on each DNA strand where it exits the tetramer. Each RuvB hexamer is contacted by two RuvA subunits (via domain III) on 2 adjacent RuvB subunits; this complex drives branch migration. In the full resolvosome a probable DNA-RuvA(4)-RuvB(12)-RuvC(2) complex forms which resolves the HJ.

The protein resides in the cytoplasm. Its function is as follows. The RuvA-RuvB-RuvC complex processes Holliday junction (HJ) DNA during genetic recombination and DNA repair, while the RuvA-RuvB complex plays an important role in the rescue of blocked DNA replication forks via replication fork reversal (RFR). RuvA specifically binds to HJ cruciform DNA, conferring on it an open structure. The RuvB hexamer acts as an ATP-dependent pump, pulling dsDNA into and through the RuvAB complex. HJ branch migration allows RuvC to scan DNA until it finds its consensus sequence, where it cleaves and resolves the cruciform DNA. In Rhizobium rhizogenes (strain K84 / ATCC BAA-868) (Agrobacterium radiobacter), this protein is Holliday junction branch migration complex subunit RuvA.